The chain runs to 1134 residues: Envelopment polyprotein (1134 aa).

A signal peptide spans 1–16 (MWSLLLLAALVGQGFA). Topologically, residues 17 to 484 (LKNVFDMRIQ…PGFHGWATAA (468 aa)) are lumenal. Cystine bridges form between cysteine 27–cysteine 149, cysteine 61–cysteine 155, cysteine 107–cysteine 126, cysteine 131–cysteine 136, cysteine 173–cysteine 183, cysteine 208–cysteine 245, cysteine 232–cysteine 349, cysteine 374–cysteine 433, cysteine 378–cysteine 387, and cysteine 403–cysteine 422. An N-linked (GlcNAc...) asparagine; by host glycan is attached at asparagine 132. N-linked (GlcNAc...) asparagine; by host glycans are attached at residues asparagine 233 and asparagine 345. The N-linked (GlcNAc...) asparagine; by host glycan is linked to asparagine 397. Residues 485–504 (LLITFCFGWVLIPACTLAIL) form a helical membrane-spanning segment. The Cytoplasmic portion of the chain corresponds to 505–626 (LVLKFFANIL…NLFRYKSRCY (122 aa)). The binding to the ribonucleoprotein stretch occupies residues 514–531 (LHTSNQENRFKAILRKIK). 2 consecutive CCHC-type zinc fingers follow at residues 543 to 563 (CEIC…NLSC) and 568 to 589 (CPYC…YKVC). Binding to the ribonucleoprotein stretches follow at residues 586 to 603 (YKVC…KKTV), 590 to 601 (QATHRFREDLKK), and 609 to 623 (WARL…RYKS). Positions 609–632 (WARLYRTLNLFRYKSRCYILTMWT) constitute an ITAM domain. The YxxL motif lies at 613–616 (YRTL). Residues 627-647 (ILTMWTLLLIIESILWAASAA) form a helical membrane-spanning segment. The Lumenal segment spans residues 648–1105 (EIPLVPLWTD…WVMGIINGNW (458 aa)). Disulfide bonds link cysteine 734-cysteine 769, cysteine 738-cysteine 776, cysteine 750-cysteine 884, cysteine 764-cysteine 895, cysteine 779-cysteine 903, cysteine 805-cysteine 814, cysteine 822-cysteine 831, and cysteine 862-cysteine 866. A fusion loop region spans residues 756 to 776 (YEYENSWACNPPDCPGVGTGC). Asparagine 927 is a glycosylation site (N-linked (GlcNAc...) asparagine; by host). 5 disulfide bridges follow: cysteine 969–cysteine 999, cysteine 992–cysteine 1044, cysteine 1009–cysteine 1014, cysteine 1045–cysteine 1050, and cysteine 1084–cysteine 1088. A helical membrane pass occupies residues 1106–1125 (VVLIVLCVLLLFSLILLSIL). Residues 1121 to 1134 (LLSILCPVRKHKKS) form a binding to the ribonucleoprotein region. The Cytoplasmic portion of the chain corresponds to 1126–1134 (CPVRKHKKS).

Belongs to the hantavirus envelope glycoprotein family. As to quaternary structure, homodimer. Homotetramer; forms heterotetrameric Gn-Gc spikes in the pre-fusion conformation. Interacts (via C-terminus) with the nucleoprotein. Interacts with host TUFM; this interaction contributes to the virus-induced degradation of mitochondria by autophagy, which leads to degradation of host MAVS and inhibition of type I interferon (IFN) responses. Interacts with host MAP1LC3B; this interaction contributes to the virus-induced degradation of mitochondria by autophagy, which leads to degradation of host MAVS and inhibition of type I interferon (IFN) responses. Homodimer. Homotetramer; forms heterotetrameric Gn-Gc spikes in the pre-fusion conformation. Homotrimer; forms homotrimer in the post-fusion conformation at acidic pH. Interacts (via C-terminus) with the nucleoprotein. In terms of processing, envelope polyprotein precursor is quickly cleaved in vivo just after synthesis, presumably by host signal peptidase.

It localises to the virion membrane. It is found in the host cell surface. Its subcellular location is the host Golgi apparatus membrane. The protein localises to the host endoplasmic reticulum membrane. The protein resides in the host mitochondrion. Forms homotetramers with glycoprotein C at the surface of the virion. Attaches the virion to host cell receptors including integrin ITGAV/ITGB3. This attachment induces virion internalization predominantly through clathrin-dependent endocytosis. Mediates the assembly and budding of infectious virus particles through its interaction with the nucleocapsid protein and the viral genome. May dysregulate normal immune and endothelial cell responses through an ITAM motif. Translocates to mitochondria, binds to host TUFM and recruits MAP1LC3B. These interactions induce mitochondrial autophagy and therefore destruction of host MAVS leading to inhibition of type I interferon (IFN) responses. Concomitant breakdown of glycoprotein N is apparently prevented by the nucleoprotein that may inhibit Gn-stimulated autophagosome-lysosome fusion. Interacts with the viral genomic RNA. In terms of biological role, forms homotetramers with glycoprotein N at the surface of the virion. Attaches the virion to host cell receptors including integrin ITGAV/ITGB3. This attachment induces virion internalization predominantly through clathrin-dependent endocytosis. Class II fusion protein that promotes fusion of viral membrane with host endosomal membrane after endocytosis of the virion. The protein is Envelopment polyprotein (GP) of Homo sapiens (Human).